Consider the following 392-residue polypeptide: MTRFLLCSFALVLLYPSGIDMYLVGLPRIAQDLGASEAQLHIAFSVYLAGMASAMLFAGRIADRSGRKPVAIVGAAIFVIASLICAQVHTSSHFLIGRFIQGIAAGSCYVVAFAILRDTLDDRRRAKVLSLLNGITCIIPVLAPVLGHLIMLKYPWQSLFYTMTGMGVMVAVLSVFILRETRPTAPPQAALPQHDAGESLLNRFFLSRLLITTLSVTVILTYVNVSPVLMMEEMGFDRGTYSMAMALMAMISMAVSFSTPFVLSLFNPRTLMLTSQVLFLAAGVTLSLATRQAVTLIGLGMICAGFSVGFGVAMSQALGPFTLRAGVASSVLGIAQVCGSSLWIWLAAIIGLSAMNMLIGILIACSIVSLVLLLVVTPPRVAQYDEEAAVES.

12 helical membrane-spanning segments follow: residues Phe-4 to Val-24, Ala-38 to Ala-58, Pro-69 to His-89, Leu-95 to Ile-115, Leu-131 to Met-151, Ser-158 to Leu-178, Leu-209 to Leu-229, Ala-246 to Phe-266, Thr-270 to Thr-290, Val-294 to Met-314, Val-331 to Gly-351, and Met-357 to Thr-377.

Belongs to the major facilitator superfamily. DHA1 family. MdtL (TC 2.A.1.2.22) subfamily.

It is found in the cell inner membrane. This Klebsiella pneumoniae subsp. pneumoniae (strain ATCC 700721 / MGH 78578) protein is Multidrug resistance protein MdtL.